The chain runs to 30 residues: Cyclotide cter-O (30 aa).

The segment at residues 1-30 is a cross-link (cyclopeptide (Gly-Asn)); the sequence is GIPCGESCVFIPCITGIAGCSCKSKVCYRN. Cystine bridges form between C4-C20, C8-C22, and C13-C27.

Post-translationally, this is a cyclic peptide.

The protein localises to the secreted. Its function is as follows. Probably participates in a plant defense mechanism. This chain is Cyclotide cter-O, found in Clitoria ternatea (Butterfly pea).